The chain runs to 200 residues: Holliday junction branch migration complex subunit RuvA (200 aa).

The segment at 1-63 (MYAYVKGKLT…EDAQLLYGFS (63 aa)) is domain I. The interval 64 to 142 (SEEEKDMFLS…ITEEDSDSLL (79 aa)) is domain II. The flexible linker stretch occupies residues 143–149 (QVDATST). The segment at 150-200 (VQDQFVQEAMLALEALGYSKRELAKVEKTLNKNKYDSVDEAVKAGLQLVVS) is domain III.

This sequence belongs to the RuvA family. In terms of assembly, homotetramer. Forms an RuvA(8)-RuvB(12)-Holliday junction (HJ) complex. HJ DNA is sandwiched between 2 RuvA tetramers; dsDNA enters through RuvA and exits via RuvB. An RuvB hexamer assembles on each DNA strand where it exits the tetramer. Each RuvB hexamer is contacted by two RuvA subunits (via domain III) on 2 adjacent RuvB subunits; this complex drives branch migration. In the full resolvosome a probable DNA-RuvA(4)-RuvB(12)-RuvC(2) complex forms which resolves the HJ.

It localises to the cytoplasm. Functionally, the RuvA-RuvB-RuvC complex processes Holliday junction (HJ) DNA during genetic recombination and DNA repair, while the RuvA-RuvB complex plays an important role in the rescue of blocked DNA replication forks via replication fork reversal (RFR). RuvA specifically binds to HJ cruciform DNA, conferring on it an open structure. The RuvB hexamer acts as an ATP-dependent pump, pulling dsDNA into and through the RuvAB complex. HJ branch migration allows RuvC to scan DNA until it finds its consensus sequence, where it cleaves and resolves the cruciform DNA. This is Holliday junction branch migration complex subunit RuvA from Staphylococcus aureus (strain Mu3 / ATCC 700698).